We begin with the raw amino-acid sequence, 116 residues long: Large ribosomal subunit protein bL17 (116 aa).

The protein belongs to the bacterial ribosomal protein bL17 family. As to quaternary structure, part of the 50S ribosomal subunit. Contacts proteins L3 and L32.

Functionally, binds to the 23S rRNA. This is Large ribosomal subunit protein bL17 from Deinococcus radiodurans (strain ATCC 13939 / DSM 20539 / JCM 16871 / CCUG 27074 / LMG 4051 / NBRC 15346 / NCIMB 9279 / VKM B-1422 / R1).